The chain runs to 401 residues: Type 3 secretion system translocon protein SctE (401 aa).

Residues 129-160 (IQRLHEQNMKKIEENQEKIKETEENAKQVKKS) are a coiled coil. Transmembrane regions (helical) follow at residues 176-196 (VIVG…AMMV) and 224-244 (ILGP…TVMT). Positions 345–379 (LALNKADMAALQSIIDRLKEELSHLSESHQQVMEL) form a coiled coil.

This sequence belongs to the SctE/SipB/YopB family. As to quaternary structure, the core secretion machinery of the T3SS is composed of approximately 20 different proteins, including cytoplasmic components, a base, an export apparatus and a needle. This subunit is involved in the formation of a pore, called the translocon, in host membrane. Interacts with YopD/SctB. Together with YopD/SctB, forms a multimeric integral membrane complex.

Its subcellular location is the secreted. The protein resides in the host membrane. In terms of biological role, component of the type III secretion system (T3SS), also called injectisome, which is used to inject bacterial effector proteins into eukaryotic host cells. YopB/SctE and YopD/SctB are inserted into the host membrane where they form a pore and allow the translocation of effector proteins into the cytosol of target cells. Is an essential virulence determinant. Required for YopE and YopH translocation. Shows membrane disruptive activity in vitro. Its function is as follows. Interaction with the host cell triggers a signaling response, via activation of the small GTPase Ras, the MAPK kinases ERK and JNK and the nuclear factor NF-kappa-B pathways, and production of the proinflammatory cytokine interleukin-8 (IL-8). YopB/SctE-dependent signaling response is counteracted by YopE, YopH and YopJ in infected host cells. YopB/SctE is directly responsible for signaling and its insertion in the membrane is important to activate the signaling response in the host cell. In Yersinia pseudotuberculosis serotype I (strain IP32953), this protein is Type 3 secretion system translocon protein SctE.